The primary structure comprises 824 residues: Leucine--tRNA ligase (824 aa).

The 'HIGH' region signature appears at 42 to 52 (PYPSGKIHMGH). The short motif at 581–585 (KMSKS) is the 'KMSKS' region element. ATP is bound at residue Lys584.

It belongs to the class-I aminoacyl-tRNA synthetase family.

Its subcellular location is the cytoplasm. The enzyme catalyses tRNA(Leu) + L-leucine + ATP = L-leucyl-tRNA(Leu) + AMP + diphosphate. This chain is Leucine--tRNA ligase, found in Geobacter sp. (strain M21).